The following is a 254-amino-acid chain: Distal membrane-arm assembly complex protein 2 (254 aa).

A Phosphoserine modification is found at Ser-250.

This sequence belongs to the ATP synthase subunit s family. Interacts with incompletely assembled mitochondrial NADH:ubiquinone oxidoreductase complex (complex I).

The protein resides in the mitochondrion. Functionally, required for the assembly of the mitochondrial NADH:ubiquinone oxidoreductase complex (complex I). Involved in the assembly of the distal region of complex I. This Rattus norvegicus (Rat) protein is Distal membrane-arm assembly complex protein 2.